An 868-amino-acid polypeptide reads, in one-letter code: Hopanoid transporter HpnN (868 aa).

Transmembrane regions (helical) follow at residues 16-36, 273-293, 298-318, 326-346, 370-390, 403-423, 452-472, 710-730, 740-760, 762-782, 805-825, and 834-854; these read FAAF…FYTY, GAVV…WMAL, IIFA…AVGL, LLSI…GIQF, YSAV…LSFL, IAGA…PALL, IAII…LYFM, IVAS…ILLW, ALTL…CVLI, LPLN…GVAF, AIFF…LSSH, and LLAL…PALM. The region spanning 299–425 is the SSD domain; that stretch reads IFAVAANLVI…ITVLPALLKL (127 aa).

It belongs to the resistance-nodulation-cell division (RND) (TC 2.A.6) family. MmpL subfamily.

The protein localises to the cell inner membrane. Its function is as follows. Essential for hopanoid transport from the cytoplasmic to the outer membrane. Required for the C(35) hopanoid, bacteriohopanetetrol, to remain localized to the mother cell type. The polypeptide is Hopanoid transporter HpnN (Rhodopseudomonas palustris (strain TIE-1)).